A 340-amino-acid chain; its full sequence is L-threonine 3-dehydrogenase (340 aa).

Residue cysteine 38 participates in Zn(2+) binding. Active-site charge relay system residues include threonine 40 and histidine 43. The Zn(2+) site is built by histidine 63, glutamate 64, cysteine 93, cysteine 96, cysteine 99, and cysteine 107. NAD(+) is bound by residues isoleucine 175, aspartate 195, arginine 200, 262-264 (LGI), and 286-287 (IY).

The protein belongs to the zinc-containing alcohol dehydrogenase family. Homotetramer. Zn(2+) is required as a cofactor.

Its subcellular location is the cytoplasm. The catalysed reaction is L-threonine + NAD(+) = (2S)-2-amino-3-oxobutanoate + NADH + H(+). It functions in the pathway amino-acid degradation; L-threonine degradation via oxydo-reductase pathway; glycine from L-threonine: step 1/2. Its function is as follows. Catalyzes the NAD(+)-dependent oxidation of L-threonine to 2-amino-3-ketobutyrate. The sequence is that of L-threonine 3-dehydrogenase from Legionella pneumophila subsp. pneumophila (strain Philadelphia 1 / ATCC 33152 / DSM 7513).